Reading from the N-terminus, the 225-residue chain is Protein-L-isoaspartate O-methyltransferase (225 aa).

Serine 75 is a catalytic residue.

Belongs to the methyltransferase superfamily. L-isoaspartyl/D-aspartyl protein methyltransferase family.

It localises to the cytoplasm. It carries out the reaction [protein]-L-isoaspartate + S-adenosyl-L-methionine = [protein]-L-isoaspartate alpha-methyl ester + S-adenosyl-L-homocysteine. Catalyzes the methyl esterification of L-isoaspartyl residues in peptides and proteins that result from spontaneous decomposition of normal L-aspartyl and L-asparaginyl residues. It plays a role in the repair and/or degradation of damaged proteins. The sequence is that of Protein-L-isoaspartate O-methyltransferase from Stenotrophomonas maltophilia (strain R551-3).